The primary structure comprises 88 residues: Small ribosomal subunit protein uS17 (88 aa).

The protein belongs to the universal ribosomal protein uS17 family. In terms of assembly, part of the 30S ribosomal subunit.

Functionally, one of the primary rRNA binding proteins, it binds specifically to the 5'-end of 16S ribosomal RNA. The protein is Small ribosomal subunit protein uS17 of Ectopseudomonas mendocina (strain ymp) (Pseudomonas mendocina).